Reading from the N-terminus, the 644-residue chain is Phosphomethylpyrimidine synthase (644 aa).

Substrate is bound by residues N236, M265, Y294, H330, 350 to 352, 391 to 394, and E430; these read SRG and DGLR. H434 serves as a coordination point for Zn(2+). Y457 is a substrate binding site. Residue H498 participates in Zn(2+) binding. Residues C578, C581, and C586 each contribute to the [4Fe-4S] cluster site. Positions 623–644 are disordered; sequence RQKSEEFKASGSELYHPAVEAE.

This sequence belongs to the ThiC family. Homodimer. Requires [4Fe-4S] cluster as cofactor.

The catalysed reaction is 5-amino-1-(5-phospho-beta-D-ribosyl)imidazole + S-adenosyl-L-methionine = 4-amino-2-methyl-5-(phosphooxymethyl)pyrimidine + CO + 5'-deoxyadenosine + formate + L-methionine + 3 H(+). It participates in cofactor biosynthesis; thiamine diphosphate biosynthesis. In terms of biological role, catalyzes the synthesis of the hydroxymethylpyrimidine phosphate (HMP-P) moiety of thiamine from aminoimidazole ribotide (AIR) in a radical S-adenosyl-L-methionine (SAM)-dependent reaction. The sequence is that of Phosphomethylpyrimidine synthase from Aliivibrio fischeri (strain MJ11) (Vibrio fischeri).